Reading from the N-terminus, the 291-residue chain is Urease accessory protein UreD (291 aa).

This sequence belongs to the UreD family. As to quaternary structure, ureD, UreF and UreG form a complex that acts as a GTP-hydrolysis-dependent molecular chaperone, activating the urease apoprotein by helping to assemble the nickel containing metallocenter of UreC. The UreE protein probably delivers the nickel.

It is found in the cytoplasm. Functionally, required for maturation of urease via the functional incorporation of the urease nickel metallocenter. This chain is Urease accessory protein UreD, found in Acinetobacter baumannii (strain ACICU).